We begin with the raw amino-acid sequence, 90 residues long: RNA-binding protein Hfq (90 aa).

Positions Glu9–Val68 constitute a Sm domain.

It belongs to the Hfq family. In terms of assembly, homohexamer.

Functionally, RNA chaperone that binds small regulatory RNA (sRNAs) and mRNAs to facilitate mRNA translational regulation in response to envelope stress, environmental stress and changes in metabolite concentrations. Also binds with high specificity to tRNAs. This chain is RNA-binding protein Hfq, found in Halorhodospira halophila (strain DSM 244 / SL1) (Ectothiorhodospira halophila (strain DSM 244 / SL1)).